Reading from the N-terminus, the 1486-residue chain is Chromosome partition protein MukB (1486 aa).

Residue 34-41 (GGNGAGKS) coordinates ATP. Coiled-coil stretches lie at residues 326–418 (LEAD…QYNQ), 444–480 (LETFQAKELEATEKMLSLEQKMSMAQTAHSQFEQAYQ), and 509–603 (RHLA…RAPV). A flexible hinge region spans residues 666-783 (PGGSEDQRLN…EVPLFGRAAR (118 aa)). Coiled-coil stretches lie at residues 835 to 923 (EAEI…AKLE), 977 to 1115 (EMLS…TAKA), and 1209 to 1266 (VEAI…QNVS).

The protein belongs to the SMC family. MukB subfamily. Homodimerization via its hinge domain. Binds to DNA via its C-terminal region. Interacts, and probably forms a ternary complex, with MukE and MukF via its C-terminal region. The complex formation is stimulated by calcium or magnesium. Interacts with tubulin-related protein FtsZ.

The protein localises to the cytoplasm. It localises to the nucleoid. In terms of biological role, plays a central role in chromosome condensation, segregation and cell cycle progression. Functions as a homodimer, which is essential for chromosome partition. Involved in negative DNA supercoiling in vivo, and by this means organize and compact chromosomes. May achieve or facilitate chromosome segregation by condensation DNA from both sides of a centrally located replisome during cell division. This chain is Chromosome partition protein MukB, found in Escherichia coli (strain K12 / MC4100 / BW2952).